The chain runs to 450 residues: Cytochrome c1 (450 aa).

An N-terminal signal peptide occupies residues 1 to 21 (MTLRNASLTAVAALTVALAGG). The span at 24-58 (AQDASTAPGTTAPAGSSYHTNEAAPAAADTAPAAE) shows a compositional bias: low complexity. Residues 24-210 (AQDASTAPGT…AAAQEAGDSH (187 aa)) form a disordered region. 3 stretches are compositionally biased toward acidic residues: residues 59 to 77 (AADE…EVTE), 85 to 108 (PAEE…EPAA), and 118 to 194 (APAE…EDEA). Residues Cys245, Cys248, and His249 each contribute to the heme c site. The disordered stretch occupies residues 284–305 (PETEEDRPRVPTDHFPTVSGEG). Met373 provides a ligand contact to heme c. The chain crosses the membrane as a helical span at residues 421-435 (SVIFLIVLAALLYLT).

As to quaternary structure, the main subunits of complex b-c1 are: cytochrome b, cytochrome c1 and the Rieske protein. In terms of processing, binds 1 heme c group covalently per subunit.

It is found in the cell membrane. Its function is as follows. Component of the ubiquinol-cytochrome c reductase complex (complex III or cytochrome b-c1 complex), which is a respiratory chain that generates an electrochemical potential coupled to ATP synthesis. c1 functions as an electron donor to cytochrome c. The sequence is that of Cytochrome c1 (petC) from Paracoccus denitrificans.